The sequence spans 521 residues: Zinc finger CCCH domain-containing protein 45 (521 aa).

3 disordered regions span residues 28–60 (TEDSPANVASQPQRHSYPSRKPRGPDLPPGFEG), 142–185 (TPAI…PLCS), and 296–319 (SRSFTNPERRVSPPKPVNGSISPP). The span at 34–43 (NVASQPQRHS) shows a compositional bias: polar residues. Low complexity predominate over residues 159–168 (EESSNSKVES). Polar residues predominate over residues 170–185 (VTANKQGQLETKPLCS). The segment at 469–497 (NKIHQQCIYFGTANGCNMGDSCTYVHDRY) adopts a C3H1-type zinc-finger fold.

This chain is Zinc finger CCCH domain-containing protein 45, found in Arabidopsis thaliana (Mouse-ear cress).